A 339-amino-acid polypeptide reads, in one-letter code: Glycerol-3-phosphate dehydrogenase [NAD(P)+] (339 aa).

3 residues coordinate NADPH: serine 11, tryptophan 12, and lysine 109. 3 residues coordinate sn-glycerol 3-phosphate: lysine 109, glycine 140, and serine 142. Alanine 144 contributes to the NADPH binding site. The sn-glycerol 3-phosphate site is built by lysine 195, aspartate 249, serine 259, arginine 260, and asparagine 261. Lysine 195 acts as the Proton acceptor in catalysis. Arginine 260 is an NADPH binding site. Positions 284 and 286 each coordinate NADPH.

This sequence belongs to the NAD-dependent glycerol-3-phosphate dehydrogenase family.

The protein resides in the cytoplasm. The catalysed reaction is sn-glycerol 3-phosphate + NAD(+) = dihydroxyacetone phosphate + NADH + H(+). The enzyme catalyses sn-glycerol 3-phosphate + NADP(+) = dihydroxyacetone phosphate + NADPH + H(+). The protein operates within membrane lipid metabolism; glycerophospholipid metabolism. Its function is as follows. Catalyzes the reduction of the glycolytic intermediate dihydroxyacetone phosphate (DHAP) to sn-glycerol 3-phosphate (G3P), the key precursor for phospholipid synthesis. This Lactobacillus acidophilus (strain ATCC 700396 / NCK56 / N2 / NCFM) protein is Glycerol-3-phosphate dehydrogenase [NAD(P)+].